A 298-amino-acid chain; its full sequence is MTKQTEYKRKPEWLKIKLNTNENYTGLKKMMRSKQLHTVCEEAKCPNIHECWAVRKTATFMILGAICTRACRFCAVKTGLPTELDLQEPERVADSVVQMGLKHVVITAVARDDLKDGGAAVFAETVRAVRRKNPFTSIEVLPSDMGGVEENLRILMDAKPDILNHNIETVRRLSDRVRARAKYDRSLEFLRRAKEMQPDIPTKSSIMVGLGETREDLLEAMDDLRANNVDILTLGQYLQPSKKHLPVIRYYTPAEFAELKEIALSKGFSHCEAGPLVRSSYHADEQVRSAKENTVEAK.

The [4Fe-4S] cluster site is built by Cys40, Cys45, Cys51, Cys67, Cys71, Cys74, and Ser280. In terms of domain architecture, Radical SAM core spans 53–269 (AVRKTATFMI…KEIALSKGFS (217 aa)).

Belongs to the radical SAM superfamily. Lipoyl synthase family. [4Fe-4S] cluster serves as cofactor.

It is found in the cytoplasm. The catalysed reaction is [[Fe-S] cluster scaffold protein carrying a second [4Fe-4S](2+) cluster] + N(6)-octanoyl-L-lysyl-[protein] + 2 oxidized [2Fe-2S]-[ferredoxin] + 2 S-adenosyl-L-methionine + 4 H(+) = [[Fe-S] cluster scaffold protein] + N(6)-[(R)-dihydrolipoyl]-L-lysyl-[protein] + 4 Fe(3+) + 2 hydrogen sulfide + 2 5'-deoxyadenosine + 2 L-methionine + 2 reduced [2Fe-2S]-[ferredoxin]. It participates in protein modification; protein lipoylation via endogenous pathway; protein N(6)-(lipoyl)lysine from octanoyl-[acyl-carrier-protein]. Functionally, catalyzes the radical-mediated insertion of two sulfur atoms into the C-6 and C-8 positions of the octanoyl moiety bound to the lipoyl domains of lipoate-dependent enzymes, thereby converting the octanoylated domains into lipoylated derivatives. The polypeptide is Lipoyl synthase (Bacillus cytotoxicus (strain DSM 22905 / CIP 110041 / 391-98 / NVH 391-98)).